Here is a 970-residue protein sequence, read N- to C-terminus: Translation initiation factor IF-2 (970 aa).

2 disordered regions span residues K54–Q270 and D328–S348. A compositionally biased stretch (low complexity) spans Q87–P96. Residues Y98–E112 show a composition bias toward polar residues. Low complexity predominate over residues E121–P149. Pro residues-rich tracts occupy residues Q150 to A160 and P168 to S182. Residues V183 to Q253 are compositionally biased toward low complexity. Residues I469–K638 enclose the tr-type G domain. The G1 stretch occupies residues G478–T485. GTP is bound at residue G478–T485. The tract at residues G503–H507 is G2. The G3 stretch occupies residues D524 to G527. Residues D524 to H528 and N578 to D581 contribute to the GTP site. A G4 region spans residues N578–D581. Residues S614–R616 form a G5 region.

This sequence belongs to the TRAFAC class translation factor GTPase superfamily. Classic translation factor GTPase family. IF-2 subfamily.

It is found in the cytoplasm. One of the essential components for the initiation of protein synthesis. Protects formylmethionyl-tRNA from spontaneous hydrolysis and promotes its binding to the 30S ribosomal subunits. Also involved in the hydrolysis of GTP during the formation of the 70S ribosomal complex. This is Translation initiation factor IF-2 from Anaeromyxobacter sp. (strain Fw109-5).